A 677-amino-acid polypeptide reads, in one-letter code: Platelet glycoprotein Ib alpha chain (677 aa).

The first 16 residues, 1-16 (MHLLLWLLLLARLCRP), serve as a signal peptide directing secretion. In terms of domain architecture, LRRNT spans 17-47 (EFICEVSKVTSQVEVNCDNKGLKALPPGLPG). Topologically, residues 17 to 564 (EFICEVSKVT…NPDLCCLLPL (548 aa)) are extracellular. A disulfide bridge connects residues Cys20 and Cys33. LRR repeat units follow at residues 72–93 (RLAQLHLRQSQLTQLQVDGMLP), 94–115 (RLETLDVSHNRLKSLPSLGRAL), 117–138 (ALTTLDASFNELVALSPGTLDG), 141–162 (HLHELYLRGNKLKTLPPRLLAP), 165–186 (QLRKLNLADNRLTELPPGFLEG), and 189–210 (ELDTLYLQGNWLRTVPKGFFGD). The region spanning 221-282 (NPWSCDCEIL…HTYQGKDCPS (62 aa)) is the LRRCT domain. Intrachain disulfides connect Cys225–Cys264 and Cys227–Cys280. A sulfotyrosine mark is found at Tyr291 and Tyr294. Thr309, Thr319, Thr323, Thr324, Thr346, Thr354, Thr368, Thr372, Thr376, Thr377, and Thr399 each carry an O-linked (GalNAc...) threonine glycan. Residues 359 to 499 (TLGPIMPTTT…EPTTTPTSPT (141 aa)) are disordered. Low complexity-rich tracts occupy residues 362-385 (PIMPTTTPEPTTPPTTLEPTTTPT), 393-403 (PTTLEPTTTPI), 411-421 (PTTLEPTTTPI), and 427-470 (TPST…TPTI). The span at 471 to 485 (PELPTPPTTPEPTMP) shows a compositional bias: pro residues. A compositionally biased stretch (low complexity) spans 486-499 (PTTLEPTTTPTSPT). A glycan (O-linked (GalNAc...) threonine) is linked at Thr487. An O-linked (GalNAc...) serine glycan is attached at Ser497. Residue Thr500 is glycosylated (O-linked (GalNAc...) threonine). A glycan (O-linked (GalNAc...) serine) is linked at Ser523. Residues 565–585 (GFYILGLLWLLFASVVLILLL) traverse the membrane as a helical segment. Residues 586–677 (TWAQHVKPQA…VGVRYSSHSL (92 aa)) lie on the Cytoplasmic side of the membrane. Phosphoserine occurs at positions 654 and 657.

In terms of assembly, two GP-Ib beta are disulfide-linked to one GP-Ib alpha. GP-IX is complexed with the GP-Ib heterodimer via a non covalent linkage. Interacts with FLNB. Interacts with FLNA (via filamin repeats 4, 9, 12, 17, 19, 21, and 23). In terms of processing, O-glycosylated. Post-translationally, glycocalicin is the product of a proteolytic cleavage/shedding, catalyzed by ADAM17, which releases most of the extracellular domain. Binding sites for vWF and thrombin are in this part of the protein.

The protein resides in the membrane. Functionally, GP-Ib, a surface membrane protein of platelets, participates in the formation of platelet plugs by binding to the A1 domain of vWF, which is already bound to the subendothelium. This is Platelet glycoprotein Ib alpha chain (GP1BA) from Canis lupus familiaris (Dog).